Here is a 344-residue protein sequence, read N- to C-terminus: Protein RecA (344 aa).

An ATP-binding site is contributed by 65–72 (GPESSGKT).

The protein belongs to the RecA family.

The protein localises to the cytoplasm. Its function is as follows. Can catalyze the hydrolysis of ATP in the presence of single-stranded DNA, the ATP-dependent uptake of single-stranded DNA by duplex DNA, and the ATP-dependent hybridization of homologous single-stranded DNAs. It interacts with LexA causing its activation and leading to its autocatalytic cleavage. The protein is Protein RecA of Nitratiruptor sp. (strain SB155-2).